An 83-amino-acid chain; its full sequence is Acyl carrier protein (83 aa).

The region spanning 2-77 is the Carrier domain; the sequence is NEILSKIKSI…DANQYIKKYL (76 aa). Position 37 is an O-(pantetheine 4'-phosphoryl)serine (Ser37).

This sequence belongs to the acyl carrier protein (ACP) family. Post-translationally, 4'-phosphopantetheine is transferred from CoA to a specific serine of apo-ACP by AcpS. This modification is essential for activity because fatty acids are bound in thioester linkage to the sulfhydryl of the prosthetic group.

The protein resides in the cytoplasm. It participates in lipid metabolism; fatty acid biosynthesis. Functionally, carrier of the growing fatty acid chain in fatty acid biosynthesis. This Karelsulcia muelleri (strain GWSS) (Sulcia muelleri) protein is Acyl carrier protein.